The sequence spans 659 residues: Probable acyl-coenzyme A oxidase acox-1.5 (659 aa).

FAD is bound by residues 148–151, 156–157, and Gly190; these read YAQT and GT. Substrate is bound by residues 284–287 and Arg294; that span reads KVGY. FAD contacts are provided by residues Arg319 and 339–342; that span reads QQYR. 2 residues coordinate ATP: His395 and Gln403. Position 410 (Gly410) interacts with FAD. 432–433 is a binding site for substrate; that stretch reads YE. The active-site Proton acceptor is Glu433. Glu435 contributes to the FAD binding site. 524–527 contributes to the ATP binding site; the sequence is KAAR. Residues 657-659 carry the Microbody targeting signal motif; it reads SKL.

This sequence belongs to the acyl-CoA oxidase family. Homodimer. FAD serves as cofactor.

The protein resides in the peroxisome. It participates in lipid metabolism; peroxisomal fatty acid beta-oxidation. Activated by ATP. ATP binding leads to a conformational change that promotes FAD cofactor binding and enzyme activity. ATP binding likely occurs during acox-1.5 folding and/or dimer formation. Functionally, involved in the first step of peroxisomal beta-oxidation by catalyzing the desaturation of fatty acid-derived side chains. The chain is Probable acyl-coenzyme A oxidase acox-1.5 from Caenorhabditis elegans.